A 128-amino-acid polypeptide reads, in one-letter code: Sulfurtransferase TusD (128 aa).

Cysteine 78 serves as the catalytic Cysteine persulfide intermediate.

The protein belongs to the DsrE/TusD family. Heterohexamer, formed by a dimer of trimers. The hexameric TusBCD complex contains 2 copies each of TusB, TusC and TusD. The TusBCD complex interacts with TusE.

The protein localises to the cytoplasm. In terms of biological role, part of a sulfur-relay system required for 2-thiolation of 5-methylaminomethyl-2-thiouridine (mnm(5)s(2)U) at tRNA wobble positions. Accepts sulfur from TusA and transfers it in turn to TusE. The sequence is that of Sulfurtransferase TusD from Enterobacter sp. (strain 638).